The following is a 495-amino-acid chain: Divinyl ether synthase CYP74M3 (495 aa).

Residue C446 coordinates heme.

It belongs to the cytochrome P450 family. Heme serves as cofactor.

The catalysed reaction is (13S)-hydroperoxy-(9Z,11E)-octadecadienoate = etheroleate + H2O. It catalyses the reaction (13S)-hydroperoxy-(9Z,11E,15Z)-octadecatrienoate = etherolenate + H2O. It functions in the pathway lipid metabolism; oxylipin biosynthesis. Divinyl ether synthase involved in oxylipin biosynthesis. Catalyzes the conversion of (13S)-hydroperoxy-(9Z,11E)-octadecadienoate (13-HPOD) to etheroleate and (13S)-hydroperoxy-(9Z,11E,15Z)-octadecatrienoate (13-HPOT) to etherolenate. Has no activity with the corresponding 9-hydroperoxides (9-HPOD and 9-HPOT). This chain is Divinyl ether synthase CYP74M3, found in Selaginella moellendorffii (Spikemoss).